Reading from the N-terminus, the 244-residue chain is Ferredoxin--NADP reductase B (244 aa).

The region spanning Ala-4–Asp-106 is the FAD-binding FR-type domain. FAD is bound by residues Arg-55–Ser-58 and Thr-120.

The protein belongs to the ferredoxin--NADP reductase type 1 family. Requires FAD as cofactor.

The enzyme catalyses 2 reduced [4Fe-4S]-[ferredoxin] + NADP(+) + H(+) = 2 oxidized [4Fe-4S]-[ferredoxin] + NADPH. In terms of biological role, transports electrons between NADPH and ferredoxin. Can transfer electrons to ferredoxins Fdx2 and Fdx8. Prefers NADPH to NADH. This is Ferredoxin--NADP reductase B from Sorangium cellulosum (strain So ce56) (Polyangium cellulosum (strain So ce56)).